The primary structure comprises 59 residues: MAVPKRKTSPSRRGMRRSADALKAPTYVEDKNSGELRRPHHIDLKSGMYRGRQVLEPKE.

Basic residues predominate over residues 1 to 16 (MAVPKRKTSPSRRGMR). Positions 1 to 59 (MAVPKRKTSPSRRGMRRSADALKAPTYVEDKNSGELRRPHHIDLKSGMYRGRQVLEPKE) are disordered. The span at 28–44 (VEDKNSGELRRPHHIDL) shows a compositional bias: basic and acidic residues.

This sequence belongs to the bacterial ribosomal protein bL32 family.

This Brucella abortus (strain S19) protein is Large ribosomal subunit protein bL32.